Consider the following 1927-residue polypeptide: Immunoglobulin A1 protease (1927 aa).

A signal peptide spans Met1–Ala42. A propeptide spanning residues Gln43–Thr99 is cleaved from the precursor. Positions Leu96–Gly100 match the LPXTG sorting signal motif. Position 99 is a pentaglycyl murein peptidoglycan amidated threonine (Thr99). The next 2 membrane-spanning stretches (helical) occupy residues Gln106–Ser125 and Lys132–Leu154. Topologically, residues Glu155–Lys1927 are extracellular. Residues Gln235–Thr246 are compositionally biased toward polar residues. Disordered regions lie at residues Gln235–Asp305, Ser371–Thr394, and Glu426–Thr640. A compositionally biased stretch (basic and acidic residues) spans Leu276–Thr296. One can recognise a G5 domain in the interval Lys314–Lys393. 3 repeat units span residues Ala419–Pro435, Glu436–Pro452, and Ala453–Pro469. The interval Ala419–Pro469 is 3 X 17 AA approximate tandem repeats. Positions Val485–Glu511 are enriched in basic and acidic residues. Polar residues-rich tracts occupy residues Asn516–Gly529, Glu538–Pro559, and Glu568–Asp606. Positions Thr609 to Asn619 are enriched in low complexity. Basic and acidic residues predominate over residues Glu620–Thr640. His1565 is a binding site for Zn(2+). Glu1566 is an active-site residue. Zn(2+)-binding residues include His1569 and Glu1589.

It belongs to the peptidase M26 family. Requires Zn(2+) as cofactor. Post-translationally, the Gram-positive cell-wall anchor motif LPXTG is located in the N-terminal part, in contrast to such motifs in other known streptococcal and staphylococcal proteins. The protease could be cleaved by the sortase and anchored in the membrane via the two potential N-terminal transmembrane domains, whereas the propeptide located prior to the LPXTG motif would remain attached to the cell wall peptidoglycan by an amide bond.

The protein localises to the secreted. It localises to the cell wall. It is found in the membrane. It carries out the reaction Cleavage of Pro-|-Thr bond in the hinge region of the heavy chain of human IgA.. Zinc metalloproteinase which cleaves human immunoglobulin A1 (IgA1) in the hinge region, rendering it less efficient in coating the surface of colonizing or invading pneumococci. May be responsible for pneumococcal infection and is potentially involved in distinct stages of pneumococcal disease. The chain is Immunoglobulin A1 protease (iga) from Streptococcus pneumoniae.